Consider the following 247-residue polypeptide: UPF0246 protein LCABL_22600 (247 aa).

The protein belongs to the UPF0246 family.

In Lacticaseibacillus casei (strain BL23) (Lactobacillus casei), this protein is UPF0246 protein LCABL_22600.